The primary structure comprises 216 residues: MAKIQLVAQANLPTEYGIFKMVGFEFPDTKKEHVALVMGDISNADEPVLARIHSECLTGDALHSLKCDCGFQLATALKQIQEEGRGVLIYHREEGRGIGLINKIRAYSLQDKGMDTIEANLALGFKADERNFEVCADMFELLGVKKVRLMTNNPEKVETMKKAGINVVERVPLNVGENRYNTKYLDTKAKKMGHYIVHNNDEQHLMTCPHCQEEII.

51–55 (RIHSE) provides a ligand contact to GTP. C56, C67, and C69 together coordinate Zn(2+). GTP-binding positions include Q72, 94 to 96 (EGR), and T116. D128 acts as the Proton acceptor in catalysis. R130 serves as the catalytic Nucleophile. 2 residues coordinate GTP: T151 and K156.

The protein belongs to the GTP cyclohydrolase II family. It depends on Zn(2+) as a cofactor.

It catalyses the reaction GTP + 4 H2O = 2,5-diamino-6-hydroxy-4-(5-phosphoribosylamino)-pyrimidine + formate + 2 phosphate + 3 H(+). It functions in the pathway cofactor biosynthesis; riboflavin biosynthesis; 5-amino-6-(D-ribitylamino)uracil from GTP: step 1/4. Functionally, catalyzes the conversion of GTP to 2,5-diamino-6-ribosylamino-4(3H)-pyrimidinone 5'-phosphate (DARP), formate and pyrophosphate. The sequence is that of GTP cyclohydrolase-2 from Haemophilus influenzae (strain 86-028NP).